A 201-amino-acid polypeptide reads, in one-letter code: Casparian strip membrane protein 2 (201 aa).

Topologically, residues 1–38 (MKSTGEATAINIGETKSASATTVATTKAIQHPKAGLKR) are cytoplasmic. Residues 39 to 59 (GLAIFDFILRLSAIGAALAAT) traverse the membrane as a helical segment. Residues 60–89 (TTMGTTDQTLPFFTQFFQFQASYDDLPAFS) are Extracellular-facing. A helical transmembrane segment spans residues 90–110 (FFVIANAIASGYLFLSLPFSI). The Cytoplasmic portion of the chain corresponds to 111–129 (VCIVRPHAMGARLLLVICD). Residues 130–150 (TVMVALTIAAAAAAAAIVYLA) traverse the membrane as a helical segment. At 151–175 (HNGNSNANWVAICQQFDDFCQSVSG) the chain is on the extracellular side. A helical membrane pass occupies residues 176–196 (AVVASFIAAVLFMLMIVLSAF). At 197 to 201 (SLRKH) the chain is on the cytoplasmic side.

The protein belongs to the Casparian strip membrane proteins (CASP) family. In terms of assembly, homodimer and heterodimers.

It is found in the cell membrane. Functionally, regulates membrane-cell wall junctions and localized cell wall deposition. Required for establishment of the Casparian strip membrane domain (CSD) and the subsequent formation of Casparian strips, a cell wall modification of the root endodermis that determines an apoplastic barrier between the intraorganismal apoplasm and the extraorganismal apoplasm and prevents lateral diffusion. The polypeptide is Casparian strip membrane protein 2 (Vitis vinifera (Grape)).